We begin with the raw amino-acid sequence, 514 residues long: 2-isopropylmalate synthase (514 aa).

Residues 5 to 267 (LVIFDTTLRD…DTRIHTPEIL (263 aa)) form the Pyruvate carboxyltransferase domain. Mn(2+) is bound by residues D14, H202, H204, and N238. Residues 394 to 514 (RLVALKVGTQ…GSKEHPQAHV (121 aa)) are regulatory domain.

The protein belongs to the alpha-IPM synthase/homocitrate synthase family. LeuA type 1 subfamily. As to quaternary structure, homodimer. The cofactor is Mn(2+).

It is found in the cytoplasm. It carries out the reaction 3-methyl-2-oxobutanoate + acetyl-CoA + H2O = (2S)-2-isopropylmalate + CoA + H(+). Its pathway is amino-acid biosynthesis; L-leucine biosynthesis; L-leucine from 3-methyl-2-oxobutanoate: step 1/4. Functionally, catalyzes the condensation of the acetyl group of acetyl-CoA with 3-methyl-2-oxobutanoate (2-ketoisovalerate) to form 3-carboxy-3-hydroxy-4-methylpentanoate (2-isopropylmalate). The protein is 2-isopropylmalate synthase of Hydrogenovibrio crunogenus (strain DSM 25203 / XCL-2) (Thiomicrospira crunogena).